We begin with the raw amino-acid sequence, 492 residues long: uncharacterized protein (492 aa).

266 to 273 (GIQGTGKS) is a binding site for ATP.

It belongs to the AAA ATPase family. Highly divergent.

It is found in the plastid. The protein localises to the chloroplast. This is an uncharacterized protein from Pyropia yezoensis (Susabi-nori).